A 520-amino-acid chain; its full sequence is ATP synthase subunit alpha (520 aa).

169–176 (GDRKTGKT) provides a ligand contact to ATP.

Belongs to the ATPase alpha/beta chains family. As to quaternary structure, F-type ATPases have 2 components, CF(1) - the catalytic core - and CF(0) - the membrane proton channel. CF(1) has five subunits: alpha(3), beta(3), gamma(1), delta(1), epsilon(1). CF(0) has three main subunits: a(1), b(2) and c(9-12). The alpha and beta chains form an alternating ring which encloses part of the gamma chain. CF(1) is attached to CF(0) by a central stalk formed by the gamma and epsilon chains, while a peripheral stalk is formed by the delta and b chains.

Its subcellular location is the cell membrane. The enzyme catalyses ATP + H2O + 4 H(+)(in) = ADP + phosphate + 5 H(+)(out). Produces ATP from ADP in the presence of a proton gradient across the membrane. The alpha chain is a regulatory subunit. The chain is ATP synthase subunit alpha from Oenococcus oeni (strain ATCC BAA-331 / PSU-1).